A 344-amino-acid chain; its full sequence is DnaJ homolog subfamily C member 25 (344 aa).

The helical transmembrane segment at 5-25 threads the bilayer; it reads WVLLVALSVLFLSGRAGALTE. In terms of domain architecture, J spans 33–108; it reads VCYDVLGVSR…ETRKDYDYML (76 aa). The next 2 helical transmembrane spans lie at 134–154 and 228–248; these read IVIL…WWSS and ILLF…SWYV.

Belongs to the DNAJC25 family.

It is found in the membrane. In Xenopus laevis (African clawed frog), this protein is DnaJ homolog subfamily C member 25 (dnajc25).